The chain runs to 149 residues: MPTVDLKILDARLADQQPAYATPGSAGLDLRAAIDAETEIRPGETRLIPTGIALHLEDPRYAAMILPRSGLGHKHGIVLGNLVGLIDSDYQGQVFVSVWNRGHETFRLAPLDRIAQMVIVPVVQVDFRVVDDFTSSSRGSGGFGSTGRQ.

Substrate-binding positions include 68 to 70 (RSG), Asn81, and 85 to 87 (LID).

It belongs to the dUTPase family. Mg(2+) is required as a cofactor.

It carries out the reaction dUTP + H2O = dUMP + diphosphate + H(+). Its pathway is pyrimidine metabolism; dUMP biosynthesis; dUMP from dCTP (dUTP route): step 2/2. Its function is as follows. This enzyme is involved in nucleotide metabolism: it produces dUMP, the immediate precursor of thymidine nucleotides and it decreases the intracellular concentration of dUTP so that uracil cannot be incorporated into DNA. The protein is Deoxyuridine 5'-triphosphate nucleotidohydrolase of Laribacter hongkongensis (strain HLHK9).